The following is an 875-amino-acid chain: Alanine--tRNA ligase (875 aa).

The Zn(2+) site is built by His564, His568, Cys666, and His670.

This sequence belongs to the class-II aminoacyl-tRNA synthetase family. In terms of assembly, homotetramer. Zn(2+) is required as a cofactor.

The protein localises to the cytoplasm. The catalysed reaction is tRNA(Ala) + L-alanine + ATP = L-alanyl-tRNA(Ala) + AMP + diphosphate. In terms of biological role, catalyzes the attachment of alanine to tRNA(Ala) in a two-step reaction: alanine is first activated by ATP to form Ala-AMP and then transferred to the acceptor end of tRNA(Ala). Also edits incorrectly charged Ser-tRNA(Ala) and Gly-tRNA(Ala) via its editing domain. In Klebsiella pneumoniae subsp. pneumoniae (strain ATCC 700721 / MGH 78578), this protein is Alanine--tRNA ligase.